The primary structure comprises 98 residues: Cystatin-B (98 aa).

Positions 4-83 constitute a Cystatin domain; sequence GGTSQPVDAD…PCNGETLELS (80 aa). The Secondary area of contact motif lies at 46 to 50; sequence QCVPG.

It belongs to the cystatin family. In terms of tissue distribution, ubiquitously expressed in normal and lipopolysaccharide (LPS)-stimulated tissues including brain, eye, gullet, heart, liver, muscle, stomach, kidney, spleen, pyloric ceca, intestine and gill.

The protein localises to the cytoplasm. Its activity is regulated as follows. Greatly decreased inhibitory activity against papain protease by metal ions including ZnSO(4), CuSO(4), HgCl(2) and CoCl(2). Decreased inhibitory activity against papain protease by detergents including Tween 20, SDS and Brij 35. Its function is as follows. Thiol protease inhibitor. Has high papain, bovine cathepsin B and fish cathepsins F and X inhibitory activity and inhibits fish cathepsins L, S and K to a lesser extent in vitro. May be involved in innate immunity. This chain is Cystatin-B, found in Paralichthys olivaceus (Bastard halibut).